Consider the following 150-residue polypeptide: C-type natriuretic peptide (150 aa).

Positions 1 to 31 (MSISSSSSSSSSSSSCLLLISLMLLAASCQG) are cleaved as a signal peptide. Residues 32-127 (RPDLQHRNHK…RKMFRGRTKK (96 aa)) constitute a propeptide that is removed on maturation. Residues 60–73 (GAADGSSGEEAALS) are compositionally biased toward low complexity. The segment at 60-109 (GAADGSSGEEAALSQRAPPSIRALHPRSGRLGLRDDLEAEPPAENKPRRR) is disordered. C134 and C150 are oxidised to a cystine.

The protein belongs to the natriuretic peptide family. Expressed in brain, but not in atrium or ventricle.

The protein localises to the secreted. Its function is as follows. Hormone which plays a role in endochondral ossification through regulation of cartilaginous growth plate chondrocytes proliferation and differentiation. May also be vasoactive and natriuretic. The protein is C-type natriuretic peptide (cnp) of Acipenser transmontanus (White sturgeon).